An 89-amino-acid polypeptide reads, in one-letter code: Exodeoxyribonuclease 7 small subunit (89 aa).

Residues 1-22 (MRKKSSSNKEETALHPPPENFE) are disordered.

Belongs to the XseB family. In terms of assembly, heterooligomer composed of large and small subunits.

It localises to the cytoplasm. The enzyme catalyses Exonucleolytic cleavage in either 5'- to 3'- or 3'- to 5'-direction to yield nucleoside 5'-phosphates.. Functionally, bidirectionally degrades single-stranded DNA into large acid-insoluble oligonucleotides, which are then degraded further into small acid-soluble oligonucleotides. This Nitrosomonas europaea (strain ATCC 19718 / CIP 103999 / KCTC 2705 / NBRC 14298) protein is Exodeoxyribonuclease 7 small subunit.